Reading from the N-terminus, the 521-residue chain is Cytoplasmic polyadenylation element-binding protein 2 (521 aa).

The span at 1 to 11 shows a compositional bias: pro residues; it reads MNLPQQQPPAA. Disordered stretches follow at residues 1 to 35 and 50 to 88; these read MNLP…QAAA and PLLK…NMGI. Low complexity predominate over residues 12 to 35; sequence APQQPQSRRSPVSPQLQQQHQAAA. Serine 21 is modified (phosphoserine). Over residues 55 to 70 the composition is skewed to polar residues; the sequence is SPWSNHQNSGWGTASM. 2 consecutive RRM domains span residues 264–355 and 372–454; these read RKVF…PWNL and KTIF…PYVL.

Belongs to the RRM CPEB family. In terms of assembly, interacts with TENT2/GLD2. Expressed in embryo, cerebellum, salivary gland, thymus, heart, liver, lung, spleen, kidney, intestine, ovary and round spermatids. Weakly expressed in granular cells of dentate gyrus and the pyramidal cells of CA3 and CA1 of the hippocampus.

It localises to the cytoplasm. Functionally, may play a role in translational regulation of stored mRNAs in transcriptionally inactive haploid spermatids. Binds to poly(U) RNA oligomers. Required for cell cycle progression, specifically for the transition from metaphase to anaphase. The sequence is that of Cytoplasmic polyadenylation element-binding protein 2 (Cpeb2) from Mus musculus (Mouse).